The chain runs to 269 residues: 4-hydroxy-tetrahydrodipicolinate reductase (269 aa).

NAD(+) is bound by residues 11–16 (GASGRM) and E37. R38 contacts NADP(+). NAD(+) is bound by residues 101–103 (GTT) and 125–128 (AGNM). H158 (proton donor/acceptor) is an active-site residue. H159 contributes to the (S)-2,3,4,5-tetrahydrodipicolinate binding site. K162 acts as the Proton donor in catalysis. 168 to 169 (GT) provides a ligand contact to (S)-2,3,4,5-tetrahydrodipicolinate.

It belongs to the DapB family.

The protein resides in the cytoplasm. It catalyses the reaction (S)-2,3,4,5-tetrahydrodipicolinate + NAD(+) + H2O = (2S,4S)-4-hydroxy-2,3,4,5-tetrahydrodipicolinate + NADH + H(+). The catalysed reaction is (S)-2,3,4,5-tetrahydrodipicolinate + NADP(+) + H2O = (2S,4S)-4-hydroxy-2,3,4,5-tetrahydrodipicolinate + NADPH + H(+). It participates in amino-acid biosynthesis; L-lysine biosynthesis via DAP pathway; (S)-tetrahydrodipicolinate from L-aspartate: step 4/4. In terms of biological role, catalyzes the conversion of 4-hydroxy-tetrahydrodipicolinate (HTPA) to tetrahydrodipicolinate. This is 4-hydroxy-tetrahydrodipicolinate reductase from Cereibacter sphaeroides (strain ATCC 17029 / ATH 2.4.9) (Rhodobacter sphaeroides).